Reading from the N-terminus, the 238-residue chain is Nuclear transcription factor Y subunit B-9 (238 aa).

A DNA-binding region spans residues 64–70; it reads MPIANVI. The interval 91-102 is subunit association domain (SAD); that stretch reads IQECVSEYISFV. The tract at residues 203 to 238 is disordered; it reads RYYQNGSSGQDESSVGGGSSSSINGMPAFDHYGQYK. A compositionally biased stretch (low complexity) spans 208-227; sequence GSSGQDESSVGGGSSSSING.

Belongs to the NFYB/HAP3 subunit family. Heterotrimeric transcription factor composed of three components, NF-YA, NF-YB and NF-YC. NF-YB and NF-YC must interact and dimerize for NF-YA association and DNA binding. Interacts with PRN1. As to expression, expressed in green siliques. Present in etiolated seedlings.

The protein resides in the nucleus. Component of the NF-Y/HAP transcription factor complex. The NF-Y complex stimulates the transcription of various genes by recognizing and binding to a CCAAT motif in promoters. Acts as a central regulator of the embryogenesis. Required for the speciation of cotyledon identity and the completion of embryo maturation. Controls seed storage protein genes through the regulation of FUS3 and ABI3. Involved in the blue light (BL) and abscisic acid (ABA) signaling pathways. This Arabidopsis thaliana (Mouse-ear cress) protein is Nuclear transcription factor Y subunit B-9 (NFYB9).